The following is an 82-amino-acid chain: MDELDIAFFILPLGIMLLSIVGTCICKNPYLMPMLSLVISLVLTFTIFNQSFLGWAVVYSLVSLALSYITLIVVRKRKESGN.

3 helical membrane-spanning segments follow: residues 4-26, 31-48, and 52-74; these read LDIA…TCIC, LMPM…FTIF, and FLGW…LIVV.

The protein resides in the cell membrane. This is an uncharacterized protein from Bacillus subtilis (strain 168).